The chain runs to 228 residues: PKHD-type hydroxylase YbiX (228 aa).

The 100-residue stretch at 78 to 177 (TLSTPLFNRY…RVASFIWIQS (100 aa)) folds into the Fe2OG dioxygenase domain. Fe cation contacts are provided by His96, Asp98, and His158. Position 168 (Arg168) interacts with 2-oxoglutarate.

It depends on Fe(2+) as a cofactor. Requires L-ascorbate as cofactor.

This Escherichia coli O157:H7 protein is PKHD-type hydroxylase YbiX.